The chain runs to 447 residues: Argininosuccinate synthase (447 aa).

Residues 17 to 25 (AFSGGLDTS) and alanine 43 contribute to the ATP site. Tyrosine 99 provides a ligand contact to L-citrulline. Residues glycine 129 and threonine 131 each contribute to the ATP site. The L-aspartate site is built by threonine 131, asparagine 135, and aspartate 136. Asparagine 135 is a binding site for L-citrulline. ATP is bound at residue aspartate 136. Residues arginine 139 and serine 192 each contribute to the L-citrulline site. Aspartate 194 provides a ligand contact to ATP. 3 residues coordinate L-citrulline: threonine 201, glutamate 203, and glutamate 280.

Belongs to the argininosuccinate synthase family. Type 2 subfamily. Homotetramer.

It localises to the cytoplasm. The enzyme catalyses L-citrulline + L-aspartate + ATP = 2-(N(omega)-L-arginino)succinate + AMP + diphosphate + H(+). It participates in amino-acid biosynthesis; L-arginine biosynthesis; L-arginine from L-ornithine and carbamoyl phosphate: step 2/3. The polypeptide is Argininosuccinate synthase (Escherichia coli O9:H4 (strain HS)).